The chain runs to 546 residues: High-affinity glucose transporter ght5 (546 aa).

The Cytoplasmic portion of the chain corresponds to 1–9; the sequence is MGKNLTIVM. A helical membrane pass occupies residues 10–30; it reads LVFVSMAGWMFGADTGSIGGI. The Extracellular portion of the chain corresponds to 31–58; it reads TNMRDFQSRFADRYNPVTDSYSYSSARQ. The helical transmembrane segment at 59-79 threads the bilayer; it reads GLITGMVNVGSFFGCFLSSPL. Residues 80–87 are Cytoplasmic-facing; sequence MDRIGKRT. Residues 88–108 traverse the membrane as a helical segment; that stretch reads SIMFWTIVYLIGIILQVTAVP. At 109–112 the chain is on the extracellular side; the sequence is SWVQ. The chain crosses the membrane as a helical span at residues 113 to 133; the sequence is IMVAKIWTGLSIGALSVLAPG. The Cytoplasmic segment spans residues 134 to 144; that stretch reads FQSEVAPADLR. The helical transmembrane segment at 145–165 threads the bilayer; that stretch reads GTIVTTYQLAVTGGIFIAACI. Residues 166–179 lie on the Extracellular side of the membrane; sequence NMGTHKLHKTAQWR. A helical transmembrane segment spans residues 180-200; the sequence is VSMGINLLWGIITFIGISFLP. Residues 201 to 266 lie on the Cytoplasmic side of the membrane; sequence ESPRYLISVG…IFGPDIRYRT (66 aa). Residues 267–285 form a helical membrane-spanning segment; sequence FLGLGVMSLQQLTGDNYYF. The Extracellular segment spans residues 286–301; sequence YYGFEVFEGTGMNSPY. The chain crosses the membrane as a helical span at residues 302-322; the sequence is LSALILDAVNFGCTFGGLFVL. Topologically, residues 323–328 are cytoplasmic; the sequence is EFFGRR. Residues 329–349 form a helical membrane-spanning segment; sequence MPLIIGALWQSITFFIYAAVG. The Extracellular segment spans residues 350-363; it reads NRALTRKNGTSNHR. The N-linked (GlcNAc...) asparagine glycan is linked to Asn-357. The chain crosses the membrane as a helical span at residues 364–384; sequence AGAVMIVFSCLFIFSFAQTWG. Residues 385–404 lie on the Cytoplasmic side of the membrane; it reads PAAYVIVGESYPIRYRSKCA. The chain crosses the membrane as a helical span at residues 405–425; that stretch reads AVATTGNWLWGFLISFFTPFI. The Extracellular segment spans residues 426–432; that stretch reads TNSIGFK. The chain crosses the membrane as a helical span at residues 433–453; that stretch reads YGYIFAACNLCAACIIFLFAH. Residues 454–546 lie on the Cytoplasmic side of the membrane; it reads ETKGLTLEEI…SYHDQEEQFA (93 aa). The interval 486 to 546 is disordered; that stretch reads KQQEEVREKS…SYHDQEEQFA (61 aa). Over residues 487 to 496 the composition is skewed to basic and acidic residues; it reads QQEEVREKSR. The span at 509-519 shows a compositional bias: acidic residues; the sequence is VDGEEGIEDSS. The span at 520–529 shows a compositional bias: low complexity; it reads NDISSTTSSD. Residues Ser-528 and Ser-537 each carry the phosphoserine modification. Over residues 530-546 the composition is skewed to basic and acidic residues; the sequence is GRAKPESSYHDQEEQFA.

The protein belongs to the major facilitator superfamily. Sugar transporter (TC 2.A.1.1) family.

The protein localises to the membrane. Functionally, high-affinity glucose transporter. The polypeptide is High-affinity glucose transporter ght5 (ght5) (Schizosaccharomyces pombe (strain 972 / ATCC 24843) (Fission yeast)).